The sequence spans 364 residues: Valine dehydrogenase (364 aa).

The active site involves Lys-91. Residue 191–197 (GVGKVGH) coordinates NAD(+).

It belongs to the Glu/Leu/Phe/Val dehydrogenases family. As to quaternary structure, homodimer.

It localises to the cytoplasm. The catalysed reaction is L-valine + NAD(+) + H2O = 3-methyl-2-oxobutanoate + NH4(+) + NADH + H(+). The protein operates within amino-acid degradation; L-valine degradation. With respect to regulation, repressed in minimal medium by the presence of glucose and NH4(+), glycerol and NH4(+), or glycerol and asparagine. Oxidative deamination of branched-chain amino acids. Oxidizes L-valine and L-alpha-aminobutyric acid efficiently, and L-isoleucine and L-leucine less efficiently. Does not act on D-valine. The catabolism of L-valine is the major source of fatty acid precursors for macrolide biosynthesis and a vital source of antibiotic precursors. Uses NAD; no activity was found with NADP. In Streptomyces coelicolor (strain ATCC BAA-471 / A3(2) / M145), this protein is Valine dehydrogenase (vdh).